Consider the following 130-residue polypeptide: Iron-sulfur cluster assembly 1 homolog, mitochondrial (130 aa).

The N-terminal 24 residues, 1–24, are a transit peptide targeting the mitochondrion; that stretch reads MATRVVATATVRAVKGRKLIPTRA. The Fe cation site is built by Cys-58, Cys-122, and Cys-124.

It belongs to the HesB/IscA family. As to quaternary structure, interacts with cry. In terms of tissue distribution, detected in head.

It is found in the mitochondrion. Its function is as follows. Involved in the assembly of mitochondrial iron-sulfur proteins. Probably involved in the binding of an intermediate of Fe/S cluster assembly. Required for maintenance of circadian rhythms under constant darkness. In Drosophila melanogaster (Fruit fly), this protein is Iron-sulfur cluster assembly 1 homolog, mitochondrial.